The following is a 286-amino-acid chain: Mitochondrial dicarboxylate carrier (286 aa).

Solcar repeat units lie at residues 7-87 (SRWY…MRDY), 100-187 (SKVL…AKQL), and 196-279 (DNIF…LRKH). 3 helical membrane-spanning segments follow: residues 9-29 (WYFG…LDLL), 62-81 (GLSA…FAIY), and 102-122 (VLLG…ADLV). At Lys158 the chain carries N6-acetyllysine. Transmembrane regions (helical) follow at residues 162–181 (GATM…LSCY), 202–222 (FLSS…LDVL), and 254–274 (GLVP…MFLE).

It belongs to the mitochondrial carrier (TC 2.A.29) family. Expressed most strongly in liver, then kidney, and at lower levels in heart and brain.

Its subcellular location is the mitochondrion inner membrane. The enzyme catalyses (S)-malate(in) + phosphate(out) = (S)-malate(out) + phosphate(in). The catalysed reaction is malonate(out) + (S)-malate(in) = malonate(in) + (S)-malate(out). It carries out the reaction (S)-malate(in) + succinate(out) = (S)-malate(out) + succinate(in). It catalyses the reaction (S)-malate(in) + sulfate(out) = (S)-malate(out) + sulfate(in). The enzyme catalyses malonate(out) + phosphate(in) = malonate(in) + phosphate(out). The catalysed reaction is succinate(out) + phosphate(in) = succinate(in) + phosphate(out). It carries out the reaction sulfate(out) + phosphate(in) = sulfate(in) + phosphate(out). It catalyses the reaction malonate(out) + succinate(in) = malonate(in) + succinate(out). In terms of biological role, catalyzes the electroneutral exchange or flux of physiologically important metabolites such as dicarboxylates (malonate, malate, succinate), inorganic sulfur-containing anions, and phosphate, across mitochondrial inner membrane. Plays an important role in gluconeogenesis, fatty acid metabolism, urea synthesis, and sulfur metabolism, particularly in liver, by supplying the substrates for the different metabolic processes. Regulates fatty acid release from adipocytes, and contributes to systemic insulin sensitivity. This chain is Mitochondrial dicarboxylate carrier, found in Rattus norvegicus (Rat).